The primary structure comprises 159 residues: ATP synthase subunit b (159 aa).

A helical transmembrane segment spans residues 7-27 (DFIWTLINFFVLLFILKILLY).

Belongs to the ATPase B chain family. In terms of assembly, F-type ATPases have 2 components, F(1) - the catalytic core - and F(0) - the membrane proton channel. F(1) has five subunits: alpha(3), beta(3), gamma(1), delta(1), epsilon(1). F(0) has three main subunits: a(1), b(2) and c(10-14). The alpha and beta chains form an alternating ring which encloses part of the gamma chain. F(1) is attached to F(0) by a central stalk formed by the gamma and epsilon chains, while a peripheral stalk is formed by the delta and b chains.

It localises to the cell membrane. In terms of biological role, f(1)F(0) ATP synthase produces ATP from ADP in the presence of a proton or sodium gradient. F-type ATPases consist of two structural domains, F(1) containing the extramembraneous catalytic core and F(0) containing the membrane proton channel, linked together by a central stalk and a peripheral stalk. During catalysis, ATP synthesis in the catalytic domain of F(1) is coupled via a rotary mechanism of the central stalk subunits to proton translocation. Its function is as follows. Component of the F(0) channel, it forms part of the peripheral stalk, linking F(1) to F(0). The protein is ATP synthase subunit b of Carboxydothermus hydrogenoformans (strain ATCC BAA-161 / DSM 6008 / Z-2901).